The following is a 635-amino-acid chain: MSLISMHGAWLSFSDAPLLDNAELHIEDNERVCLVGRNGAGKSTLMKILNREQGLDDGRIIYEQDLIVARLQQDPPRNVEGSVYDFVAEGIEEQAEYLKRYHDISRLVMNDPSEKNLNELAKVQEQLDHHNLWQLENRINEVLAQLGLDPNVALSSLSGGWLRKAALGRALVSNPRVLLLDEPTNHLDIETIDWLEGFLKTFNGTIIFISHDRSFIRNMATRIVDLDRGKLVTYPGNYDQYLLEKEEALRVEELQNAEFDRKLAQEEVWIRQGIKARRTRNEGRVRALKAMRRERGERREVMGTAKMQVEEASRSGKIVFEMEDVCYQVNGKQLVKDFSAQVLRGDKIALIGPNGCGKTTLLKLMLGQLQADSGRIHVGTKLEVAYFDQHRAELDPDKTVMDNLAEGKQEVMVNGKPRHVLGYLQDFLFHPKRAMTPVRALSGGERNRLLLARLFLKPSNLLILDEPTNDLDVETLELLEELIDSYQGTVLLVSHDRQFVDNTVTECWIFEGGGKIGRYVGGYHDARGQQEQYVALKQPAVKKTEEAAAAKAETVKRSSSKLSYKLQRELEQLPQLLEDLEAKLEALQTQVADASFFSQPHEQTQKVLADMAAAEQELEQAFERWEYLEALKNGG.

2 ABC transporter domains span residues 1–253 (MSLI…RVEE) and 320–546 (FEME…KTEE). ATP is bound by residues 36–43 (GRNGAGKS) and 352–359 (GPNGCGKT). The segment at 551–635 (KAETVKRSSS…EYLEALKNGG (85 aa)) is C-terminal domain (CTD), binds DNA, required to complement a deletion mutant. The stretch at 563–631 (SYKLQRELEQ…FERWEYLEAL (69 aa)) forms a coiled coil.

It belongs to the ABC transporter superfamily. ABCF family. Uup subfamily.

Its subcellular location is the cytoplasm. The enzyme catalyses ATP + H2O = ADP + phosphate + H(+). Its activity is regulated as follows. ATPase activity inhibited by N-ethylmaleimide but not by vanadate. In terms of biological role, probably plays a role in ribosome assembly or function; overexpression suppresses cold-sensitive growth of a bipA deletion. May be involved in resolution of branched DNA intermediates that result from template switching in postreplication gaps. Binds DNA at Holliday junctions. May be involved in the correct segregation of nucleoids. Has ATPase activity, binds DNA non-sequence specifically; the presence of DNA does not change the ATPase activity. Mutations in this gene cause an increase in RecA-independent precise excision of transposons and insertion elements, and also reduce bacteriophage Mu growth. Genetic interactions among priB, dam, lexA, nagC, polA, rdgB, rdgB, rep and uup link the PriA-PriB replication restart pathway to DNA double-strand break repair. The chain is ATP-binding protein Uup from Escherichia coli (strain K12).